The following is a 636-amino-acid chain: 1-deoxy-D-xylulose-5-phosphate synthase (636 aa).

Residues histidine 74 and 115 to 117 each bind thiamine diphosphate; that span reads GHA. A Mg(2+)-binding site is contributed by aspartate 146. Thiamine diphosphate-binding positions include 147-148, asparagine 175, tyrosine 285, and glutamate 368; that span reads GA. Asparagine 175 is a Mg(2+) binding site.

Belongs to the transketolase family. DXPS subfamily. As to quaternary structure, homodimer. The cofactor is Mg(2+). Thiamine diphosphate serves as cofactor.

The enzyme catalyses D-glyceraldehyde 3-phosphate + pyruvate + H(+) = 1-deoxy-D-xylulose 5-phosphate + CO2. It participates in metabolic intermediate biosynthesis; 1-deoxy-D-xylulose 5-phosphate biosynthesis; 1-deoxy-D-xylulose 5-phosphate from D-glyceraldehyde 3-phosphate and pyruvate: step 1/1. In terms of biological role, catalyzes the acyloin condensation reaction between C atoms 2 and 3 of pyruvate and glyceraldehyde 3-phosphate to yield 1-deoxy-D-xylulose-5-phosphate (DXP). This chain is 1-deoxy-D-xylulose-5-phosphate synthase, found in Anaeromyxobacter sp. (strain K).